A 305-amino-acid polypeptide reads, in one-letter code: tRNA pseudouridine synthase B (305 aa).

The active-site Nucleophile is D41.

The protein belongs to the pseudouridine synthase TruB family. Type 1 subfamily.

The enzyme catalyses uridine(55) in tRNA = pseudouridine(55) in tRNA. In terms of biological role, responsible for synthesis of pseudouridine from uracil-55 in the psi GC loop of transfer RNAs. In Prochlorococcus marinus subsp. pastoris (strain CCMP1986 / NIES-2087 / MED4), this protein is tRNA pseudouridine synthase B.